The chain runs to 299 residues: Nucleotide-binding protein SCO1952 (299 aa).

23-30 lines the ATP pocket; that stretch reads GMSGAGRS. Residue 74-77 coordinates GTP; the sequence is DVRG.

The protein belongs to the RapZ-like family.

Functionally, displays ATPase and GTPase activities. This chain is Nucleotide-binding protein SCO1952, found in Streptomyces coelicolor (strain ATCC BAA-471 / A3(2) / M145).